Here is a 413-residue protein sequence, read N- to C-terminus: Putative competence-damage inducible protein (413 aa).

It belongs to the CinA family.

The polypeptide is Putative competence-damage inducible protein (Thermoanaerobacter sp. (strain X514)).